A 284-amino-acid chain; its full sequence is 2-dehydro-3-deoxyphosphooctonate aldolase (284 aa).

It belongs to the KdsA family.

It localises to the cytoplasm. The catalysed reaction is D-arabinose 5-phosphate + phosphoenolpyruvate + H2O = 3-deoxy-alpha-D-manno-2-octulosonate-8-phosphate + phosphate. It functions in the pathway carbohydrate biosynthesis; 3-deoxy-D-manno-octulosonate biosynthesis; 3-deoxy-D-manno-octulosonate from D-ribulose 5-phosphate: step 2/3. The protein operates within bacterial outer membrane biogenesis; lipopolysaccharide biosynthesis. The chain is 2-dehydro-3-deoxyphosphooctonate aldolase from Edwardsiella ictaluri (strain 93-146).